Here is a 146-residue protein sequence, read N- to C-terminus: Putative esterase DR_2321 (146 aa).

It belongs to the thioesterase PaaI family.

This is Putative esterase DR_2321 from Deinococcus radiodurans (strain ATCC 13939 / DSM 20539 / JCM 16871 / CCUG 27074 / LMG 4051 / NBRC 15346 / NCIMB 9279 / VKM B-1422 / R1).